We begin with the raw amino-acid sequence, 155 residues long: Ribosome maturation factor RimP (155 aa).

It belongs to the RimP family.

It is found in the cytoplasm. In terms of biological role, required for maturation of 30S ribosomal subunits. This is Ribosome maturation factor RimP from Gloeothece citriformis (strain PCC 7424) (Cyanothece sp. (strain PCC 7424)).